Here is a 194-residue protein sequence, read N- to C-terminus: UPF0301 protein FTM_0963 (194 aa).

The protein belongs to the UPF0301 (AlgH) family.

This is UPF0301 protein FTM_0963 from Francisella tularensis subsp. mediasiatica (strain FSC147).